Consider the following 84-residue polypeptide: Large ribosomal subunit protein bL31B (84 aa).

Belongs to the bacterial ribosomal protein bL31 family. Type B subfamily. As to quaternary structure, part of the 50S ribosomal subunit.

This chain is Large ribosomal subunit protein bL31B, found in Acinetobacter baumannii (strain AB307-0294).